The sequence spans 122 residues: Large ribosomal subunit protein uL14c (122 aa).

Belongs to the universal ribosomal protein uL14 family. Part of the 50S ribosomal subunit.

Its subcellular location is the plastid. It is found in the chloroplast. Its function is as follows. Binds to 23S rRNA. The chain is Large ribosomal subunit protein uL14c from Chlorokybus atmophyticus (Soil alga).